The following is a 199-amino-acid chain: LTGLFLAMHYTPDVESAFASVAHICRDVNFGWLIRNLHANGASFFFICIYFHIGRGLYYGSYLYKETWNIGVVLLLLVMMTAFVGYVLPWGQMSFWGATVITNLLSAVPYVGTTLVEWIWGGFSVDNATLTRFFAFHFLFPFVILAMTILHLLFLHETGSNNPIGLNSNADKISFHPYFSYKDLLGFAILLVALASLAH.

Helical transmembrane passes span 1–8 (LTGLFLAM), 32–53 (WLIRNLHANGASFFFICIYFHI), 68–88 (WNIGVVLLLLVMMTAFVGYVL), and 133–153 (FFAFHFLFPFVILAMTILHLL). Heme b contacts are provided by His38 and His52. Residues His137 and His151 each contribute to the heme b site. A ubiquinone is bound at residue His156. The helical transmembrane segment at 181-199 (YKDLLGFAILLVALASLAH) threads the bilayer.

Belongs to the cytochrome b family. The cytochrome bc1 complex contains 3 respiratory subunits (MT-CYB, CYC1 and UQCRFS1), 2 core proteins (UQCRC1 and UQCRC2) and probably 6 low-molecular weight proteins. The cofactor is heme b.

The protein localises to the mitochondrion inner membrane. Component of the ubiquinol-cytochrome c reductase complex (complex III or cytochrome b-c1 complex) that is part of the mitochondrial respiratory chain. The b-c1 complex mediates electron transfer from ubiquinol to cytochrome c. Contributes to the generation of a proton gradient across the mitochondrial membrane that is then used for ATP synthesis. This Sarda chiliensis (Pacific bonito) protein is Cytochrome b (mt-cyb).